Consider the following 872-residue polypeptide: Cyanophycin synthetase (872 aa).

Residues 224-480 (KTILQDAGVP…VAAPVMDMLF (257 aa)) enclose the ATP-grasp domain. 495 to 501 (GTNGKTT) is a binding site for ATP.

It in the C-terminal section; belongs to the MurCDEF family. Homodimer.

It carries out the reaction [L-4-(L-arginin-2-N-yl)aspartate](n) + L-aspartate + ATP = [L-4-(L-arginin-2-N-yl)aspartate](n)-L-aspartate + ADP + phosphate + H(+). It catalyses the reaction [L-4-(L-arginin-2-N-yl)aspartate](n)-L-aspartate + L-arginine + ATP = [L-4-(L-arginin-2-N-yl)aspartate](n+1) + ADP + phosphate + H(+). In terms of biological role, catalyzes the ATP-dependent polymerization of arginine and aspartate to multi-L-arginyl-poly-L-aspartic acid (cyanophycin; a water-insoluble reserve polymer). This chain is Cyanophycin synthetase (cphA), found in Crocosphaera subtropica (strain ATCC 51142 / BH68) (Cyanothece sp. (strain ATCC 51142)).